A 248-amino-acid polypeptide reads, in one-letter code: Ubiquinone/menaquinone biosynthesis C-methyltransferase UbiE (248 aa).

The S-adenosyl-L-methionine site is built by S68 and D92.

Belongs to the class I-like SAM-binding methyltransferase superfamily. MenG/UbiE family.

It catalyses the reaction a 2-demethylmenaquinol + S-adenosyl-L-methionine = a menaquinol + S-adenosyl-L-homocysteine + H(+). The enzyme catalyses a 2-methoxy-6-(all-trans-polyprenyl)benzene-1,4-diol + S-adenosyl-L-methionine = a 5-methoxy-2-methyl-3-(all-trans-polyprenyl)benzene-1,4-diol + S-adenosyl-L-homocysteine + H(+). It participates in quinol/quinone metabolism; menaquinone biosynthesis; menaquinol from 1,4-dihydroxy-2-naphthoate: step 2/2. It functions in the pathway cofactor biosynthesis; ubiquinone biosynthesis. Its function is as follows. Methyltransferase required for the conversion of demethylmenaquinol (DMKH2) to menaquinol (MKH2) and the conversion of 2-polyprenyl-6-methoxy-1,4-benzoquinol (DDMQH2) to 2-polyprenyl-3-methyl-6-methoxy-1,4-benzoquinol (DMQH2). This chain is Ubiquinone/menaquinone biosynthesis C-methyltransferase UbiE, found in Rickettsia akari (strain Hartford).